The sequence spans 436 residues: Enolase (436 aa).

Residue glutamine 167 coordinates (2R)-2-phosphoglycerate. The active-site Proton donor is the glutamate 209. Positions 246, 291, and 318 each coordinate Mg(2+). (2R)-2-phosphoglycerate is bound by residues lysine 343, arginine 372, serine 373, and lysine 394. Lysine 343 serves as the catalytic Proton acceptor.

It belongs to the enolase family. As to quaternary structure, component of the RNA degradosome, a multiprotein complex involved in RNA processing and mRNA degradation. Mg(2+) serves as cofactor.

Its subcellular location is the cytoplasm. It localises to the secreted. It is found in the cell surface. The enzyme catalyses (2R)-2-phosphoglycerate = phosphoenolpyruvate + H2O. The protein operates within carbohydrate degradation; glycolysis; pyruvate from D-glyceraldehyde 3-phosphate: step 4/5. Catalyzes the reversible conversion of 2-phosphoglycerate (2-PG) into phosphoenolpyruvate (PEP). It is essential for the degradation of carbohydrates via glycolysis. The sequence is that of Enolase from Glaesserella parasuis serovar 5 (strain SH0165) (Haemophilus parasuis).